Here is a 320-residue protein sequence, read N- to C-terminus: Ferrochelatase (320 aa).

Fe cation is bound by residues H194 and E275.

This sequence belongs to the ferrochelatase family.

It localises to the cytoplasm. The enzyme catalyses heme b + 2 H(+) = protoporphyrin IX + Fe(2+). The protein operates within porphyrin-containing compound metabolism; protoheme biosynthesis; protoheme from protoporphyrin-IX: step 1/1. In terms of biological role, catalyzes the ferrous insertion into protoporphyrin IX. The polypeptide is Ferrochelatase (Xylella fastidiosa (strain 9a5c)).